We begin with the raw amino-acid sequence, 193 residues long: Ion-translocating oxidoreductase complex subunit A (193 aa).

6 helical membrane-spanning segments follow: residues 5–25 (ALLL…FLGL), 39–59 (LGMG…SWML), 62–82 (WLLA…LVIA), 102–122 (SLGI…VALL), 134–154 (VLFG…FAGL), and 172–192 (AAFI…GLVA).

The protein belongs to the NqrDE/RnfAE family. The complex is composed of six subunits: RnfA, RnfB, RnfC, RnfD, RnfE and RnfG.

The protein resides in the cell inner membrane. Functionally, part of a membrane-bound complex that couples electron transfer with translocation of ions across the membrane. The sequence is that of Ion-translocating oxidoreductase complex subunit A from Aromatoleum aromaticum (strain DSM 19018 / LMG 30748 / EbN1) (Azoarcus sp. (strain EbN1)).